A 474-amino-acid polypeptide reads, in one-letter code: MFS transporter SAT21 (474 aa).

The next 6 helical transmembrane spans lie at 7–27 (LVLP…LEVP), 64–84 (LVVG…ILYF), 101–121 (CVGY…HQVF), 131–151 (LFLF…AFVA), 162–182 (FLFL…ALAT), and 189–209 (LFLP…LLQM). Positions 220-252 (KVVGSTSDQTEPFLRSSSNSSQESGTAAPAIDP) are disordered. Positions 222–244 (VGSTSDQTEPFLRSSSNSSQESG) are enriched in polar residues. The N-linked (GlcNAc...) asparagine glycan is linked to Asn238. The next 6 membrane-spanning stretches (helical) occupy residues 276–296 (FICY…AFIF), 315–335 (LALS…ANAT), 346–366 (INIG…IMAW), 374–394 (FIFS…LQGV), 406–426 (SIFA…GPLM), and 445–465 (FLAS…LWAL).

Belongs to the major facilitator superfamily.

Its subcellular location is the cell membrane. In terms of biological role, MFS transporter; part of the satratoxin SC3 cluster involved in the biosynthesis of satratoxins, trichothecene mycotoxins that are associated with human food poisonings. Satratoxins are suggested to be made by products of multiple gene clusters (SC1, SC2 and SC3) that encode 21 proteins in all, including polyketide synthases, acetyltransferases, and other enzymes expected to modify the trichothecene skeleton. SC1 encodes 10 proteins, SAT1 to SAT10. The largest are SAT8, which encodes a putative polyketide synthase (PKS) with a conventional non-reducing architecture, and SAT10, a putative protein containing four ankyrin repeats and thus may be involved in protein scaffolding. The putative short-chain reductase SAT3 may assist the PKS in some capacity. SAT6 contains a secretory lipase domain and acts probably as a trichothecene esterase. SAT5 encodes a putative acetyltransferase, and so, with SAT6, may affect endogenous protection from toxicity. The probable transcription factor SAT9 may regulate the expression of the SC1 cluster. SC2 encodes proteins SAT11 to SAT16, the largest of which encodes the putative reducing PKS SAT13. SAT11 is a cytochrome P450 monooxygenase, while SAT14 and SAT16 are probable acetyltransferases. The SC2 cluster may be regulated by the transcription factor SAT15. SC3 is a small cluster that encodes 5 proteins, SAT17 to SAT21. SAT21 is a putative MFS-type transporter which may have a role in exporting secondary metabolites. The four other proteins putatively encoded in SC3 include the taurine hydroxylase-like protein SAT17, the O-methyltransferase SAT18, the acetyltransferase SAT19, and the Cys6-type zinc finger SAT20, the latter being probably involved in regulation of SC3 expression. This Stachybotrys chartarum (strain CBS 109288 / IBT 7711) (Toxic black mold) protein is MFS transporter SAT21.